Consider the following 417-residue polypeptide: NADH-quinone oxidoreductase subunit D (417 aa).

It belongs to the complex I 49 kDa subunit family. NDH-1 is composed of 14 different subunits. Subunits NuoB, C, D, E, F, and G constitute the peripheral sector of the complex.

Its subcellular location is the cell inner membrane. It carries out the reaction a quinone + NADH + 5 H(+)(in) = a quinol + NAD(+) + 4 H(+)(out). Its function is as follows. NDH-1 shuttles electrons from NADH, via FMN and iron-sulfur (Fe-S) centers, to quinones in the respiratory chain. The immediate electron acceptor for the enzyme in this species is believed to be ubiquinone. Couples the redox reaction to proton translocation (for every two electrons transferred, four hydrogen ions are translocated across the cytoplasmic membrane), and thus conserves the redox energy in a proton gradient. In Coxiella burnetii (strain RSA 331 / Henzerling II), this protein is NADH-quinone oxidoreductase subunit D.